The following is a 272-amino-acid chain: Undecaprenyl-diphosphatase (272 aa).

7 helical membrane-spanning segments follow: residues 6–26, 45–65, 92–112, 115–135, 189–209, 225–245, and 251–271; these read SLLI…LPVS, AKTF…VMFW, THIL…HDVI, LFYP…LLAA, YAAS…ATVL, MFAV…KTFL, and ISFV…YMVF.

It belongs to the UppP family.

It localises to the cell inner membrane. It carries out the reaction di-trans,octa-cis-undecaprenyl diphosphate + H2O = di-trans,octa-cis-undecaprenyl phosphate + phosphate + H(+). Its function is as follows. Catalyzes the dephosphorylation of undecaprenyl diphosphate (UPP). Confers resistance to bacitracin. The sequence is that of Undecaprenyl-diphosphatase from Pectobacterium carotovorum subsp. carotovorum (strain PC1).